Reading from the N-terminus, the 209-residue chain is MTQPNTQTTPNDVPAAAEGQQEQQQQQRRGGGRERRGGGRRGDRRGQERDSEWQERVVQIRRVSKTVKGGKKMSFRAIVVVGNERGQVGVGVGKAGDVIGAVRKGVADGKKHLVKVPLTRHNSIPTLSNGRDGAANVLIRPAAPGTGVIAGGSIRTVLELAGIKNVLAKRLGSKTPLNNARAAMVALASLRTHKETAKERGISLEQIYS.

Over residues 1-11 (MTQPNTQTTPN) the composition is skewed to polar residues. Residues 1–55 (MTQPNTQTTPNDVPAAAEGQQEQQQQQRRGGGRERRGGGRRGDRRGQERDSEWQE) form a disordered region. Residues 18–28 (EGQQEQQQQQR) are compositionally biased toward low complexity. Over residues 31-55 (GGRERRGGGRRGDRRGQERDSEWQE) the composition is skewed to basic and acidic residues. Residues 53–116 (WQERVVQIRR…ADGKKHLVKV (64 aa)) form the S5 DRBM domain.

It belongs to the universal ribosomal protein uS5 family. In terms of assembly, part of the 30S ribosomal subunit. Contacts proteins S4 and S8.

In terms of biological role, with S4 and S12 plays an important role in translational accuracy. Located at the back of the 30S subunit body where it stabilizes the conformation of the head with respect to the body. The chain is Small ribosomal subunit protein uS5 from Prochlorococcus marinus (strain MIT 9313).